Consider the following 193-residue polypeptide: Interferon lambda-3 (193 aa).

The first 19 residues, 1–19 (MLLLLLPLLLAAVLTRTQA), serve as a signal peptide directing secretion. 3 disulfides stabilise this stretch: Cys35–Cys132, Cys69–Cys166, and Cys185–Cys192.

Belongs to the lambda interferon family.

The protein resides in the secreted. Its function is as follows. Cytokine with antiviral, antitumour and immunomodulatory activities. Plays a critical role in the antiviral host defense, predominantly in the epithelial tissues. Acts as a ligand for the heterodimeric class II cytokine receptor composed of IL10RB and IFNLR1, and receptor engagement leads to the activation of the JAK/STAT signaling pathway resulting in the expression of IFN-stimulated genes (ISG), which mediate the antiviral state. Has a restricted receptor distribution and therefore restricted targets: is primarily active in epithelial cells and this cell type-selective action is because of the epithelial cell-specific expression of its receptor IFNLR1. Seems not to be essential for early virus-activated host defense in vaginal infection, but plays an important role in Toll-like receptor (TLR)-induced antiviral defense. Plays a significant role in the antiviral immune defense in the intestinal epithelium. Exerts an immunomodulatory effect by up-regulating MHC class I antigen expression. This is Interferon lambda-3 (Ifnl3) from Mus musculus (Mouse).